Here is a 232-residue protein sequence, read N- to C-terminus: MPSLWDRFSSSSTSSSPSSLPRTPTPDRPPRSAWGSATREEGFDRSTSLESSDCESLDSSNSGFGPEEDTAYLDGVSLPDFELLSDPEDEHLCANLMQLLQESLAQARLGSRRPARLLMPSQLVSQVGKELLRLAYSEPCGLRGALLDVCVEQGKSCHSVGQLALDPSLVPTFQLTLVLRLDSRLWPKIQGLFSSANSPFLPGFSQSLTLSTGFRVIKKKLYSSEQLLIEEC.

The interval 1–71 (MPSLWDRFSS…SGFGPEEDTA (71 aa)) is disordered. Residues 9 to 22 (SSSSTSSSPSSLPR) show a composition bias toward low complexity. At Ser19 the chain carries Phosphoserine. Phosphothreonine is present on residues Thr23 and Thr25. Ser121 is subject to Phosphoserine.

The protein belongs to the DDIT4 family. As to quaternary structure, monomer. Interacts with BTRC. Identified in a complex with CUL4A, DDB1 and BTRC. Interacts with TXNIP; this inhibits the proteasomal degradation of DDIT4. Post-translationally, phosphorylated by GSK3B; this promotes proteasomal degradation. In terms of processing, polyubiquitinated by a DCX (DDB1-CUL4A-RBX1) E3 ubiquitin-protein ligase complex with BTRC as substrate-recognition component, leading to its proteasomal degradation. Broadly expressed, with lowest levels in brain, skeletal muscle and intestine. Up-regulated in substantia nigra neurons from Parkinson disease patients (at protein level).

It is found in the mitochondrion. It localises to the cytoplasm. Its subcellular location is the cytosol. Functionally, regulates cell growth, proliferation and survival via inhibition of the activity of the mammalian target of rapamycin complex 1 (mTORC1). Inhibition of mTORC1 is mediated by a pathway that involves DDIT4/REDD1, AKT1, the TSC1-TSC2 complex and the GTPase RHEB. Plays an important role in responses to cellular energy levels and cellular stress, including responses to hypoxia and DNA damage. Regulates p53/TP53-mediated apoptosis in response to DNA damage via its effect on mTORC1 activity. Its role in the response to hypoxia depends on the cell type; it mediates mTORC1 inhibition in fibroblasts and thymocytes, but not in hepatocytes. Required for mTORC1-mediated defense against viral protein synthesis and virus replication. Inhibits neuronal differentiation and neurite outgrowth mediated by NGF via its effect on mTORC1 activity. Required for normal neuron migration during embryonic brain development. Plays a role in neuronal cell death. The polypeptide is DNA damage-inducible transcript 4 protein (DDIT4) (Homo sapiens (Human)).